Reading from the N-terminus, the 656-residue chain is Nuclear elongation and deformation protein 1 (656 aa).

Residues S99 and S103 each carry the phosphoserine modification. Residues S99 to E118 are compositionally biased toward polar residues. The disordered stretch occupies residues S99–D121. Position 106 is a phosphothreonine (T106). Phosphoserine is present on residues S107, S159, and S286. Disordered regions lie at residues V282–S328 and S587–V656. Residues P291–S300 show a composition bias toward low complexity. A phosphoserine mark is found at S318, S321, and S587. Polar residues predominate over residues S318–S328. The segment covering K596–K609 has biased composition (low complexity). The segment covering F640 to V656 has biased composition (acidic residues).

It belongs to the lipin family. As to quaternary structure, interacts with dis3, pim1 and nup189.

In terms of biological role, may have a role in the maintenance of the nuclear envelope structure and in minichromosome stability. This chain is Nuclear elongation and deformation protein 1 (ned1), found in Schizosaccharomyces pombe (strain 972 / ATCC 24843) (Fission yeast).